Here is a 214-residue protein sequence, read N- to C-terminus: Adenylate kinase (214 aa).

10 to 15 (GAGKGT) serves as a coordination point for ATP. Residues 30–59 (STGDMFRAAIKAGTELGKQAKALMDEGKLV) are NMP. Residues Thr-31, Arg-36, 57 to 59 (KLV), 85 to 88 (GFPR), and Gln-92 contribute to the AMP site. Positions 122–159 (GRRVHQTSGRSYHIVYNPPKVEGKDDVTGEDLIIRADD) are LID. ATP contacts are provided by residues Arg-123 and 132–133 (SY). AMP-binding residues include Arg-156 and Arg-167. Gln-200 serves as a coordination point for ATP.

It belongs to the adenylate kinase family. In terms of assembly, monomer.

Its subcellular location is the cytoplasm. It carries out the reaction AMP + ATP = 2 ADP. It participates in purine metabolism; AMP biosynthesis via salvage pathway; AMP from ADP: step 1/1. Catalyzes the reversible transfer of the terminal phosphate group between ATP and AMP. Plays an important role in cellular energy homeostasis and in adenine nucleotide metabolism. The protein is Adenylate kinase of Haemophilus influenzae (strain PittEE).